A 673-amino-acid chain; its full sequence is Annexin A6 (673 aa).

N-acetylalanine is present on Ala-2. Position 13 is a phosphoserine (Ser-13). Annexin repeat units follow at residues 20 to 91, 92 to 163, 175 to 247, 251 to 322, 363 to 434, 435 to 506, 521 to 595, and 599 to 670; these read FNPS…GLMR, PPAY…VLLQ, DLVQ…AVVK, STAE…KLCG, FNPD…GLMM, PPAH…SLAT, EDAQ…AIVQ, and NKPL…AICG. Tyr-30 bears the Phosphotyrosine mark. N6-acetyllysine is present on residues Lys-63, Lys-68, Lys-75, and Lys-81. Position 201 is a phosphotyrosine (Tyr-201). Lys-306, Lys-370, and Lys-418 each carry N6-acetyllysine. Ser-422 carries the post-translational modification Phosphoserine. At Lys-483 the chain carries N6-acetyllysine. Residue Ser-537 is modified to Phosphoserine. At Lys-620 the chain carries N6-acetyllysine.

Belongs to the annexin family. In terms of processing, phosphorylated in response to growth factor stimulation.

Its subcellular location is the cytoplasm. The protein localises to the melanosome. Its function is as follows. May associate with CD21. May regulate the release of Ca(2+) from intracellular stores. The sequence is that of Annexin A6 (ANXA6) from Bos taurus (Bovine).